The sequence spans 291 residues: Pituitary-specific positive transcription factor 1 (291 aa).

The short motif at 5-13 (AFTSADTFI) is the 9aaTAD element. The region spanning 124–198 (MDSPEIRELE…ILSKWLEEAE (75 aa)) is the POU-specific domain. A DNA-binding region (homeobox) is located at residues 214 to 273 (KRKRRTTISIAAKDALERHFGEQNKPSSQEIMRMAEELNLEKEVVRVWFCNRRQREKRVK).

It belongs to the POU transcription factor family. Class-1 subfamily. Interacts with PITX1. Interacts with LHX3. Interacts with ELK1.

The protein localises to the nucleus. In terms of biological role, transcription factor involved in the specification of the lactotrope, somatotrope, and thyrotrope phenotypes in the developing anterior pituitary. Activates growth hormone and prolactin genes. Specifically binds to the consensus sequence 5'-TAAAT-3'. This chain is Pituitary-specific positive transcription factor 1 (POU1F1), found in Macaca mulatta (Rhesus macaque).